Here is a 144-residue protein sequence, read N- to C-terminus: Large-conductance mechanosensitive channel (144 aa).

Helical transmembrane passes span 16-36 (VIDL…VDSV) and 86-106 (GNFL…FMMV).

It belongs to the MscL family. As to quaternary structure, homopentamer.

Its subcellular location is the cell inner membrane. In terms of biological role, channel that opens in response to stretch forces in the membrane lipid bilayer. May participate in the regulation of osmotic pressure changes within the cell. This is Large-conductance mechanosensitive channel from Cupriavidus metallidurans (strain ATCC 43123 / DSM 2839 / NBRC 102507 / CH34) (Ralstonia metallidurans).